A 493-amino-acid chain; its full sequence is Glutamate--tRNA ligase (493 aa).

The 'HIGH' region motif lies at 10–20; it reads PSPTGFVHIGS. Zn(2+) contacts are provided by Cys-114, Cys-116, Cys-141, and Glu-143. The 'KMSKS' region motif lies at 258–262; it reads KLSKR. Lys-261 serves as a coordination point for ATP.

Belongs to the class-I aminoacyl-tRNA synthetase family. Glutamate--tRNA ligase type 1 subfamily. Monomer. The cofactor is Zn(2+).

The protein resides in the cytoplasm. It catalyses the reaction tRNA(Glu) + L-glutamate + ATP = L-glutamyl-tRNA(Glu) + AMP + diphosphate. In terms of biological role, catalyzes the attachment of glutamate to tRNA(Glu) in a two-step reaction: glutamate is first activated by ATP to form Glu-AMP and then transferred to the acceptor end of tRNA(Glu). In Alkaliphilus metalliredigens (strain QYMF), this protein is Glutamate--tRNA ligase.